The sequence spans 291 residues: Undecaprenyl-diphosphatase (291 aa).

8 helical membrane-spanning segments follow: residues 1 to 21 (MFIIELIKGIILGVVEGLTEF), 48 to 68 (SAFTFKIVIQLGSVFAAAWVF), 102 to 122 (LHVLVGMVPAGILGLLFDDFI), 126 to 146 (LFSVPTVMIGLFVGAIYMIIA), 162 to 182 (INYFQAFVIGISQAVAMWPGF), 203 to 223 (SDFTFIMAVPIMLAASGLSLL), 231 to 251 (IADIPFYILGFLAAFTVGLIA), and 267 to 287 (FAIYRIVLVIFIAILYFGFGI).

Belongs to the UppP family.

The protein localises to the cell membrane. It carries out the reaction di-trans,octa-cis-undecaprenyl diphosphate + H2O = di-trans,octa-cis-undecaprenyl phosphate + phosphate + H(+). Catalyzes the dephosphorylation of undecaprenyl diphosphate (UPP). Confers resistance to bacitracin. The polypeptide is Undecaprenyl-diphosphatase (Staphylococcus aureus (strain Mu3 / ATCC 700698)).